Consider the following 337-residue polypeptide: DNA-directed RNA polymerase subunit alpha (337 aa).

The segment at 1-233 (MVREEIAEST…DLFVPFLHAE (233 aa)) is alpha N-terminal domain (alpha-NTD). The tract at residues 266–337 (GIPLKYIFID…FAVDLPKVLI (72 aa)) is alpha C-terminal domain (alpha-CTD).

It belongs to the RNA polymerase alpha chain family. In plastids the minimal PEP RNA polymerase catalytic core is composed of four subunits: alpha, beta, beta', and beta''. When a (nuclear-encoded) sigma factor is associated with the core the holoenzyme is formed, which can initiate transcription.

Its subcellular location is the plastid. The protein localises to the chloroplast. The catalysed reaction is RNA(n) + a ribonucleoside 5'-triphosphate = RNA(n+1) + diphosphate. In terms of biological role, DNA-dependent RNA polymerase catalyzes the transcription of DNA into RNA using the four ribonucleoside triphosphates as substrates. The sequence is that of DNA-directed RNA polymerase subunit alpha from Dioscorea elephantipes (Elephant's foot yam).